The primary structure comprises 176 residues: Superoxide oxidase CybB (176 aa).

Over 1 to 7 (MENKYSR) the chain is Cytoplasmic. A helical membrane pass occupies residues 8–29 (LQISIHWLVFLLVIAAYCAMEF). H13 lines the heme b pocket. Over 30 to 39 (RGFFPRSDRP) the chain is Periplasmic. A helical transmembrane segment spans residues 40–64 (LINMIHVSCGISILVLMVVRLLLRL). Residue H45 participates in heme b binding. The Cytoplasmic segment spans residues 65 to 77 (KYPTPPIIPKPKP). The chain crosses the membrane as a helical span at residues 78–103 (MMTGLAHLGHLVIYLLFIALPVIGLV). Residues 104-135 (MMYNRGNPWFAFGLTMPYASEANFERVDSLKS) are Periplasmic-facing. Residues 136-158 (WHETLANLGYFVIGLHAAAALAH) traverse the membrane as a helical segment. Heme b contacts are provided by H137 and H151. Residues 159–176 (HYFWKDNTLLRMMPRKRS) lie on the Cytoplasmic side of the membrane.

It belongs to the cytochrome b561 family. Monomer. The cofactor is heme b.

Its subcellular location is the cell inner membrane. The enzyme catalyses a ubiquinol + 2 O2 = 2 superoxide + a ubiquinone + 2 H(+). It carries out the reaction a menaquinol + 2 O2 = 2 superoxide + a menaquinone + 2 H(+). Its activity is regulated as follows. Quinone binding to the enzyme accelerates the reaction with superoxide. Functionally, B-type di-heme cytochrome. Catalyzes the oxidation of superoxide to molecular oxygen and transfers the extracted electrons to ubiquinone through the two hemes. Can also use menaquinone. The enzyme may be responsible for the detoxification of the superoxide anion produced in the membrane or at its surface. However, it can also efficiently catalyze the formation of superoxide from ubiquinol under physiological conditions. The sequence is that of Superoxide oxidase CybB from Escherichia coli (strain K12).